The primary structure comprises 122 residues: Large ribosomal subunit protein uL14 (122 aa).

It belongs to the universal ribosomal protein uL14 family. Part of the 50S ribosomal subunit. Forms a cluster with proteins L3 and L19. In the 70S ribosome, L14 and L19 interact and together make contacts with the 16S rRNA in bridges B5 and B8.

Binds to 23S rRNA. Forms part of two intersubunit bridges in the 70S ribosome. The polypeptide is Large ribosomal subunit protein uL14 (Paenarthrobacter aurescens (strain TC1)).